The following is a 383-amino-acid chain: Na(+)/H(+) antiporter NhaA (383 aa).

Helical transmembrane passes span 10–30 (LIGGLILFSAALLAIVVNNSP), 56–76 (LMHWINDGLMAIYFLYIGLEI), 91–111 (IITPAIAAFAGLAMPSLIYLS), 121–141 (GWAIPSATDIAFTLAILALLG), 150–170 (LLVITIAIFDDIAAIAIIAIF), 174–194 (SLSLLSLSLGTLFILAMIICN), 206–226 (VVLGFFAWFCTIKSGVHATLA), 254–274 (PWIIYFILPVFAFANAGISFS), 289–308 (IIWGLFVGKQLGIFSILAVF), 327–347 (GISLLCGIGFTMSLFIGVLAF), and 355–375 (AIKIGVVVGSVLSGFFGYIVL).

It belongs to the NhaA Na(+)/H(+) (TC 2.A.33) antiporter family.

The protein resides in the cell inner membrane. The enzyme catalyses Na(+)(in) + 2 H(+)(out) = Na(+)(out) + 2 H(+)(in). Na(+)/H(+) antiporter that extrudes sodium in exchange for external protons. This Francisella tularensis subsp. tularensis (strain WY96-3418) protein is Na(+)/H(+) antiporter NhaA.